Here is a 113-residue protein sequence, read N- to C-terminus: Large ribosomal subunit protein uL22 (113 aa).

Belongs to the universal ribosomal protein uL22 family. In terms of assembly, part of the 50S ribosomal subunit.

Its function is as follows. This protein binds specifically to 23S rRNA; its binding is stimulated by other ribosomal proteins, e.g. L4, L17, and L20. It is important during the early stages of 50S assembly. It makes multiple contacts with different domains of the 23S rRNA in the assembled 50S subunit and ribosome. Functionally, the globular domain of the protein is located near the polypeptide exit tunnel on the outside of the subunit, while an extended beta-hairpin is found that lines the wall of the exit tunnel in the center of the 70S ribosome. The chain is Large ribosomal subunit protein uL22 from Xylella fastidiosa (strain M12).